A 423-amino-acid polypeptide reads, in one-letter code: Putative RING-H2 finger protein ATL49 (423 aa).

A helical transmembrane segment spans residues 43–63; the sequence is ILLIIIILSIIFFISGLLHIL. The RING-type; atypical zinc finger occupies 126-168; the sequence is CPVCLCEFETEDKLRLLPKCSHAFHVECIDTWLLSHSTCPLCR. Disordered regions lie at residues 213–236 and 377–399; these read NNDS…DMDG and HRIP…KTPS. Basic and acidic residues predominate over residues 379–389; that stretch reads IPPEESLKSEN.

This sequence belongs to the RING-type zinc finger family. ATL subfamily.

Its subcellular location is the membrane. It carries out the reaction S-ubiquitinyl-[E2 ubiquitin-conjugating enzyme]-L-cysteine + [acceptor protein]-L-lysine = [E2 ubiquitin-conjugating enzyme]-L-cysteine + N(6)-ubiquitinyl-[acceptor protein]-L-lysine.. The protein operates within protein modification; protein ubiquitination. Functionally, may be involved in female gametophyte development. The sequence is that of Putative RING-H2 finger protein ATL49 (ATL49) from Arabidopsis thaliana (Mouse-ear cress).